Consider the following 711-residue polypeptide: Ubiquitin carboxyl-terminal hydrolase BAP1 (711 aa).

A UCH catalytic domain is found at 4-234 (GWLELESDPG…ARLHVLKVNR (231 aa)). The short motif at 56-60 (RRSRR) is the Arg-finger motif element. C91 serves as the catalytic Nucleophile. H169 acts as the Proton donor in catalysis. The tract at residues 255-337 (THKSQESQLP…VPPNPTPIVQ (83 aa)) is disordered. Residues 269–278 (PASSKSPLAL) show a composition bias toward low complexity. The residue at position 274 (S274) is a Phosphoserine. An HBM-like motif motif is present at residues 345 to 348 (NHNY). Phosphoserine is present on residues S351 and S377. Disordered stretches follow at residues 354 to 420 (QEEE…GQLS) and 446 to 506 (SIKT…SPVT). Over residues 377–391 (SDDEDDYEDEEEDDA) the composition is skewed to acidic residues. The segment covering 462-506 (THSQPSPTPSNESTDTASEIGSAFNSPLRSPIRSANPTRPSSPVT) has biased composition (polar residues). Residue T475 is modified to Phosphothreonine. 4 positions are modified to phosphoserine: S503, S519, S567, and S579. The tract at residues 557 to 605 (LTESGKGSSPSIRPSQGSQGSGSPEEKEVVEAVDSREKPGLVRPSESLN) is disordered. Residues 563-579 (GSSPSIRPSQGSQGSGS) show a composition bias toward low complexity. The tract at residues 578 to 703 (GSPEEKEVVE…QRKPDRRKRS (126 aa)) is interaction with BRCA1. Positions 580 to 596 (PEEKEVVEAVDSREKPG) are enriched in basic and acidic residues. Residues 612–643 (KELLALLKCVEAEIANYEACLKEEVEKRKKFK) are a coiled coil. The segment at 624–668 (EIANYEACLKEEVEKRKKFKIDDQRRTHNYDEFICTFISMLAQEG) is interaction with YY1. Residues 652–680 (NYDEFICTFISMLAQEGMLANLVEQNISV) form the ULD domain. The tract at residues 681-683 (RRR) is interaction with nucleosomal DNA forming a DNA clamp with ASXL1. The Classical bipartite Nuclear localization signal (NLS) signature appears at 681–704 (RRRQGVSIGRLHKQRKPDRRKRSR). The segment at 685–711 (GVSIGRLHKQRKPDRRKRSRPYKAKRQ) is disordered. A positively charged C-terminal extension (CTE) region spans residues 695–711 (RKPDRRKRSRPYKAKRQ). The short motif at 699 to 704 (RRKRSR) is the Nuclear localization signal element. The Non-classical PY-nuclear localization signal (PY-NLS) motif lies at 699-706 (RRKRSRPY).

This sequence belongs to the peptidase C12 family. BAP1 subfamily. In terms of assembly, core component of the polycomb repressive deubiquitinase (PR-DUB) complex, at least composed of BAP1, one of ASXL1, ASXL2 or (probably) ASXL3, and one of MBD5 or MBD6. The PR-DUB core associates with a number of accessory proteins, including FOXK1, FOXK2, KDM1B, HCFC1, YY1 and OGT; KDM1B specifically associates with ASXL2 PR-DUB complexes. The BAP1 deubiquitinase activity is not required for PR-DUB assembly. Homodimerizes (via coiled-coil hinge-region between the UCH and ULD domains) to mediate assembly of 2 copies of the BAP1-ASXL heterodimer into a bisymmetric tetramer; dimerization enhances association with nucleosomes. The PR-DUB complex associates with nucleosomes to mediate deubiquitination of 'lys-120' of histone H2AK118ub1 substrates; the association requires the positively charged C-terminal tail of BAP1. Interacts (via ULD domain) with ASXL1 (via DEUBAD domain); the interaction is direct and forms a ubiquitin binding cleft. The interaction with ASXL1 stabilizes BAP1 but is not required for nucleosome binding. Associates (via C-terminus) with nucleosome and chromatosome complexes through direct interaction with DNA and the histone3/4 dimer; this association displaces the histone-2A C-terminal tail, extending and orienting the H2AK118ub1 substrate towards the BAP1 deubiquitinase active site. Also interacts (via arginine finger) directly with the histone H2A-H2B acidic patch; this interaction is not critical for nucleosome-chromatosome association but may play a role in orienting the H2AK118ub1 substrate towards the PR-DUB complex active site. Interacts with BRCA1 (via the RING finger). Interacts (via HBM-like motif) with HCFC1. Interacts (via a C-terminal region overlapping the ULD domain) with YY1; the interaction is direct and requires the interaction with HCFC1. Interacts (when phosphorylated at Thr-475) with FOXK1. Interacts (when phosphorylated at Thr-475) with FOXK2; leading to recruitment of the PR-DUB complex and repression of FOXK2 target genes. Interacts (via non-classical PY-NLS) with TNPO1/transportin-1 (via HEAT repeats 8-12); the interaction is direct, mediates BAP1 nuclear localization and disrupts BAP1 homodimerization. Interacts (via C-terminus) with KPNA1/importin alpha5 and KPNA2/importin alpha1; these interactions can contribute to BAP1 nuclear localization but are less important than the interaction with TNPO1/transportin-1. The interaction with TNPO1/transportin-1 disrupts homodimerization and blocks ubiquitination by UBE2O. Ubiquitinated: monoubiquitinated at multiple sites within its nuclear localization signal (NLS) BY UBE2O, leading to cytoplasmic retention. Able to mediate autodeubiquitination via intramolecular interactions to counteract cytoplasmic retention. Monoubiquitinated on at least 4 sites near or within its PY-NLS.

Its subcellular location is the cytoplasm. The protein localises to the nucleus. It localises to the chromosome. It carries out the reaction Thiol-dependent hydrolysis of ester, thioester, amide, peptide and isopeptide bonds formed by the C-terminal Gly of ubiquitin (a 76-residue protein attached to proteins as an intracellular targeting signal).. In terms of biological role, deubiquitinating enzyme that plays a key role in chromatin by mediating deubiquitination of histone H2A and HCFC1. Catalytic component of the polycomb repressive deubiquitinase (PR-DUB) complex, a complex that specifically mediates deubiquitination of histone H2A monoubiquitinated at 'Lys-120' (H2AK119ub1). Does not deubiquitinate monoubiquitinated histone H2B. The PR-DUB complex is an epigenetic regulator of gene expression and acts as a transcriptional coactivator, affecting genes involved in development, cell communication, signaling, cell proliferation and cell viability. Antagonizes PRC1 mediated H2AK119ub1 monoubiquitination. As part of the PR-DUB complex, associates with chromatin enriched in histone marks H3K4me1, H3K4me3, and H3K27Ac, but not in H3K27me3. Acts as a regulator of cell growth by mediating deubiquitination of HCFC1 N-terminal and C-terminal chains, with some specificity toward 'Lys-48'-linked polyubiquitin chains compared to 'Lys-63'-linked polyubiquitin chains. Deubiquitination of HCFC1 does not lead to increase stability of HCFC1. Interferes with the BRCA1 and BARD1 heterodimer activity by inhibiting their ability to mediate ubiquitination and autoubiquitination. It however does not mediate deubiquitination of BRCA1 and BARD1. Able to mediate autodeubiquitination via intramolecular interactions to counteract monoubiquitination at the nuclear localization signal (NLS), thereby protecting it from cytoplasmic sequestration. Negatively regulates epithelial-mesenchymal transition (EMT) of trophoblast stem cells during placental development by regulating genes involved in epithelial cell integrity, cell adhesion and cytoskeletal organization. This is Ubiquitin carboxyl-terminal hydrolase BAP1 (BAP1) from Bos taurus (Bovine).